Consider the following 307-residue polypeptide: Oxygen-dependent coproporphyrinogen-III oxidase (307 aa).

Ser99 is a binding site for substrate. Residues His103 and His113 each contribute to the a divalent metal cation site. His113 functions as the Proton donor in the catalytic mechanism. Substrate is bound at residue 115–117 (NVR). Residues His152 and His182 each coordinate a divalent metal cation. Positions 247–282 (YVEFNLVFDRGTLFGLQSGGRTESILMSMPPVANWR) are important for dimerization. Residue 265–267 (GGR) participates in substrate binding.

This sequence belongs to the aerobic coproporphyrinogen-III oxidase family. In terms of assembly, homodimer. A divalent metal cation serves as cofactor.

It localises to the cytoplasm. The enzyme catalyses coproporphyrinogen III + O2 + 2 H(+) = protoporphyrinogen IX + 2 CO2 + 2 H2O. The protein operates within porphyrin-containing compound metabolism; protoporphyrin-IX biosynthesis; protoporphyrinogen-IX from coproporphyrinogen-III (O2 route): step 1/1. Its function is as follows. Involved in the heme biosynthesis. Catalyzes the aerobic oxidative decarboxylation of propionate groups of rings A and B of coproporphyrinogen-III to yield the vinyl groups in protoporphyrinogen-IX. The chain is Oxygen-dependent coproporphyrinogen-III oxidase from Burkholderia multivorans (strain ATCC 17616 / 249).